Here is a 622-residue protein sequence, read N- to C-terminus: Leucine-rich repeat and immunoglobulin-like domain-containing nogo receptor-interacting protein 1-B (622 aa).

The signal sequence occupies residues 1 to 43 (MTFLQVTIKMVAREASGHSYLVACWQPILILMLGTVLSGSATG). 2 disulfide bridges follow: C44-C50 and C48-C59. The LRRNT domain occupies 44–73 (CPSRCECSAQERSVVCHRRKLITLPEGIPI). Over 44–563 (CPSRCECSAQ…FDMKTLIIAT (520 aa)) the chain is Extracellular. 11 LRR repeats span residues 74 to 95 (DTRLLDLSKNRLKAINPEEFLN), 98 to 119 (QLEDLQLNENIISVIEPGAFSN), 122 to 143 (GLRTLGLRNNNLKLIQLGVFTG), 146 to 167 (NLTRLDISENKIVILLDYMFQE), 170 to 191 (NLKELEVGDNDLVFISHRAFHG), 194 to 215 (SLEQLTMERCNLTSVPTEAFSH), 218 to 239 (NLLTLKLRHLNVNVIRDFSFRR), 266 to 287 (NITTLSITNCNLTAVPYVAIQH), 290 to 311 (YLRFFNLSFNPIEVVEGNKMHN), 314 to 335 (RLQAFHLVGGRLVSIEPYSFKG), and 338 to 359 (YLRVLNVSSNSLSTLEESAFHS). N-linked (GlcNAc...) asparagine glycosylation is present at N146. N-linked (GlcNAc...) asparagine glycosylation occurs at N204. N-linked (GlcNAc...) asparagine glycans are attached at residues N266, N276, and N295. N343 is a glycosylation site (N-linked (GlcNAc...) asparagine). Positions 371-425 (NPLACDCRLLWVFRRRWRLNFNRQQPSCETPEFLQGKEFKDFPDVLPPNYFTCQK) constitute an LRRCT domain. Intrachain disulfides connect C375–C398, C377–C423, and C448–C499. Residues 413–515 (PDVLPPNYFT…GNDTRLAHLH (103 aa)) form the Ig-like C2-type domain. N-linked (GlcNAc...) asparagine glycosylation is found at N494, N507, N528, and N544. The helical transmembrane segment at 564-584 (TMGFISFLGVVLFCLVLLFLW) threads the bilayer. Residues 585–622 (SRGKGNAKPNIEIEYVPRKVDGENSPNEGSHKISMKMI) are Cytoplasmic-facing.

The protein localises to the cell membrane. In terms of biological role, may play a role in regulating axonal regeneration and plasticity in the adult central nervous system. This is Leucine-rich repeat and immunoglobulin-like domain-containing nogo receptor-interacting protein 1-B (lingo1b) from Danio rerio (Zebrafish).